A 50-amino-acid polypeptide reads, in one-letter code: Small ribosomal subunit protein eS31 (50 aa).

Residues cysteine 22, cysteine 25, cysteine 40, and cysteine 43 each coordinate Zn(2+). The segment at 22–43 (CPRCGPGVFMADHGDRWACGKC) adopts a C4-type zinc-finger fold.

It belongs to the eukaryotic ribosomal protein eS31 family. As to quaternary structure, part of the 30S ribosomal subunit. Requires Zn(2+) as cofactor.

This chain is Small ribosomal subunit protein eS31, found in Pyrococcus furiosus (strain ATCC 43587 / DSM 3638 / JCM 8422 / Vc1).